A 278-amino-acid chain; its full sequence is Large ribosomal subunit protein uL2 (278 aa).

2 disordered regions span residues 1–58 (MAIR…GGGH) and 225–278 (VMNP…KNKR). Positions 37 to 58 (LHGRGGRNAHGRITTRHKGGGH) are enriched in basic residues. A compositionally biased stretch (basic and acidic residues) spans 253–267 (PEGRTRKNKASDKMI). The segment covering 268 to 278 (VRRRRTGKNKR) has biased composition (basic residues).

Belongs to the universal ribosomal protein uL2 family. As to quaternary structure, part of the 50S ribosomal subunit. Forms a bridge to the 30S subunit in the 70S ribosome.

One of the primary rRNA binding proteins. Required for association of the 30S and 50S subunits to form the 70S ribosome, for tRNA binding and peptide bond formation. It has been suggested to have peptidyltransferase activity; this is somewhat controversial. Makes several contacts with the 16S rRNA in the 70S ribosome. The sequence is that of Large ribosomal subunit protein uL2 from Rhodococcus erythropolis (strain PR4 / NBRC 100887).